The following is a 366-amino-acid chain: uncharacterized protein (366 aa).

To B.subtilis XkdV.

This is an uncharacterized protein from Bacillus subtilis (strain 168).